The chain runs to 447 residues: Voltage-gated purine nucleotide uniporter SLC17A9 (447 aa).

A disordered region spans residues 1–26; it reads MPSQRSSLMQPIPEETRKTPSAAAED. A run of 11 helical transmembrane segments spans residues 40 to 60, 74 to 94, 103 to 123, 129 to 149, 169 to 189, 192 to 212, 252 to 272, 287 to 307, 327 to 347, 380 to 400, and 413 to 433; these read ILLLGTCLLYCARVTMPVCTV, GIVLSSFFWGYCLTQVVGGHL, VILLSASAWGFITVTTPLLAH, LAFLTFSRILTGLLQGVYFPA, TVGAGSQVGTLVTGGVGSVLL, CGWQSVFYFSGGLTLLWAYYV, VWAAICSQLCSACSFFILLSW, WVFNVVPWMLAIPASLFSGFI, VMGLGLSSIFALCLGHTTSFL, GFLFGVANTAGALAGVVGVCL, and CVFHLVAIISNLGLGTFLVFG.

Belongs to the major facilitator superfamily. Sodium/anion cotransporter family. In brain, specifically expressed in the medulla and is associated with chromaffin granules (at protein level). Predominantly expressed in adrenal gland, brain and thyroid.

Its subcellular location is the cytoplasmic vesicle. It is found in the secretory vesicle. The protein localises to the chromaffin granule membrane. The protein resides in the secretory vesicle membrane. It localises to the lysosome membrane. The enzyme catalyses ATP(in) = ATP(out). The catalysed reaction is ADP(in) = ADP(out). It catalyses the reaction GTP(in) = GTP(out). With respect to regulation, activity is chloride-dependent. Voltage-gated ATP nucleotide uniporter that can also transport the purine nucleotides ADP and GTP. Uses the membrane potential as the driving force to control ATP accumulation in lysosomes and secretory vesicles. By controlling ATP storage in lysosomes, regulates ATP-dependent proteins of these organelles. Also indirectly regulates the exocytosis of ATP through its import into lysosomes in astrocytes and secretory vesicles such as adrenal chromaffin granules, mucin granules and synaptic vesicles. The protein is Voltage-gated purine nucleotide uniporter SLC17A9 of Mus musculus (Mouse).